A 453-amino-acid polypeptide reads, in one-letter code: Phosphoglucosamine mutase (453 aa).

The active-site Phosphoserine intermediate is serine 100. Mg(2+)-binding residues include serine 100, aspartate 239, aspartate 241, and aspartate 243. Serine 100 bears the Phosphoserine mark.

The protein belongs to the phosphohexose mutase family. Mg(2+) serves as cofactor. In terms of processing, activated by phosphorylation.

It catalyses the reaction alpha-D-glucosamine 1-phosphate = D-glucosamine 6-phosphate. Functionally, catalyzes the conversion of glucosamine-6-phosphate to glucosamine-1-phosphate. The sequence is that of Phosphoglucosamine mutase from Buchnera aphidicola subsp. Baizongia pistaciae (strain Bp).